Here is a 940-residue protein sequence, read N- to C-terminus: Bifunctional uridylyltransferase/uridylyl-removing enzyme (940 aa).

A uridylyltransferase region spans residues 1-379; that stretch reads MPRRLRPTRL…PGARPKRKAL (379 aa). Residues 380–736 are uridylyl-removing; it reads DVEGFYEDGG…GQVRPGSNAA (357 aa). Positions 496 to 618 constitute an HD domain; the sequence is VDEHTLRAVG…VENPERLRLL (123 aa). ACT domains are found at residues 737–821 and 848–929; these read EVVI…PRRG and VVEA…AARP.

The protein belongs to the GlnD family. Mg(2+) serves as cofactor.

It catalyses the reaction [protein-PII]-L-tyrosine + UTP = [protein-PII]-uridylyl-L-tyrosine + diphosphate. The catalysed reaction is [protein-PII]-uridylyl-L-tyrosine + H2O = [protein-PII]-L-tyrosine + UMP + H(+). With respect to regulation, uridylyltransferase (UTase) activity is inhibited by glutamine, while glutamine activates uridylyl-removing (UR) activity. Functionally, modifies, by uridylylation and deuridylylation, the PII regulatory proteins (GlnB and homologs), in response to the nitrogen status of the cell that GlnD senses through the glutamine level. Under low glutamine levels, catalyzes the conversion of the PII proteins and UTP to PII-UMP and PPi, while under higher glutamine levels, GlnD hydrolyzes PII-UMP to PII and UMP (deuridylylation). Thus, controls uridylylation state and activity of the PII proteins, and plays an important role in the regulation of nitrogen assimilation and metabolism. The polypeptide is Bifunctional uridylyltransferase/uridylyl-removing enzyme (Caulobacter vibrioides (strain ATCC 19089 / CIP 103742 / CB 15) (Caulobacter crescentus)).